The chain runs to 227 residues: Ubiquitin carboxyl-terminal hydrolase (227 aa).

Positions 3–224 (TWTPLESNPE…VRFTVLALTA (222 aa)) constitute a UCH catalytic domain. Cysteine 93 acts as the Nucleophile in catalysis. The active-site Proton donor is the histidine 164.

The protein belongs to the peptidase C12 family.

It catalyses the reaction Thiol-dependent hydrolysis of ester, thioester, amide, peptide and isopeptide bonds formed by the C-terminal Gly of ubiquitin (a 76-residue protein attached to proteins as an intracellular targeting signal).. Its function is as follows. Ubiquitin-protein hydrolase is involved both in the processing of ubiquitin precursors and of ubiquitinated proteins. This enzyme is a thiol protease that recognizes and hydrolyzes a peptide bond at the C-terminal glycine of ubiquitin. In Drosophila melanogaster (Fruit fly), this protein is Ubiquitin carboxyl-terminal hydrolase (Uch).